Reading from the N-terminus, the 347-residue chain is MNPLIFTLITSTIVLGTMIVMTSSHWLMIWMGFEMNMLAIIPMLMKQYSPRSMEAATKYFLTQATASMLLMLAIIINLVYSGQWTFTKLMNPTASIIMTVALAMKMGLAPFHFWVPEVTQGISLLSGLILLTWQKLAPLSVLYVISPIINLDLLLTMSILSILIGGWGGLNQTQLRKILAYSSIAHMGWMTSILIFNPMMTLLNLSLYILMTATTFTLFMTTSTTTTLALSHTWNKMPLITSSTLIIMLSLGGLPPLVGFLPKWMIIQELTKNNNIILATLMAITALLNLFFYMRLTYATSLTMFPTMNNMKIKWQFNHTKQTKCLPMLIVLSTMTLPLAPAMILLN.

The next 10 membrane-spanning stretches (helical) occupy residues 13-33 (IVLGTMIVMTSSHWLMIWMGF), 59-79 (YFLTQATASMLLMLAIIINLV), 96-116 (IIMTVALAMKMGLAPFHFWVP), 122-142 (ISLLSGLILLTWQKLAPLSVL), 144-164 (VISPIINLDLLLTMSILSILI), 178-200 (ILAYSSIAHMGWMTSILIFNPMM), 210-232 (LMTATTFTLFMTTSTTTTLALSH), 246-266 (IIMLSLGGLPPLVGFLPKWMI), 276-296 (IILATLMAITALLNLFFYMRL), and 326-346 (LPMLIVLSTMTLPLAPAMILL).

Belongs to the complex I subunit 2 family. As to quaternary structure, core subunit of respiratory chain NADH dehydrogenase (Complex I) which is composed of 45 different subunits. Interacts with TMEM242.

It localises to the mitochondrion inner membrane. The enzyme catalyses a ubiquinone + NADH + 5 H(+)(in) = a ubiquinol + NAD(+) + 4 H(+)(out). In terms of biological role, core subunit of the mitochondrial membrane respiratory chain NADH dehydrogenase (Complex I) which catalyzes electron transfer from NADH through the respiratory chain, using ubiquinone as an electron acceptor. Essential for the catalytic activity and assembly of complex I. The chain is NADH-ubiquinone oxidoreductase chain 2 from Rhynchonycteris naso (Brazilian long-nosed bat).